Here is a 284-residue protein sequence, read N- to C-terminus: Pantothenate synthetase (284 aa).

30–37 (MGNLHDGH) contributes to the ATP binding site. Residue H37 is the Proton donor of the active site. Q61 provides a ligand contact to (R)-pantoate. Q61 is a binding site for beta-alanine. 149-152 (GEKD) provides a ligand contact to ATP. Q155 is a binding site for (R)-pantoate. ATP is bound by residues I178 and 186 to 189 (LSSR).

This sequence belongs to the pantothenate synthetase family. As to quaternary structure, homodimer.

It localises to the cytoplasm. It carries out the reaction (R)-pantoate + beta-alanine + ATP = (R)-pantothenate + AMP + diphosphate + H(+). The protein operates within cofactor biosynthesis; (R)-pantothenate biosynthesis; (R)-pantothenate from (R)-pantoate and beta-alanine: step 1/1. Its function is as follows. Catalyzes the condensation of pantoate with beta-alanine in an ATP-dependent reaction via a pantoyl-adenylate intermediate. This is Pantothenate synthetase from Salmonella paratyphi B (strain ATCC BAA-1250 / SPB7).